A 358-amino-acid chain; its full sequence is UDP-N-acetylglucosamine--N-acetylmuramyl-(pentapeptide) pyrophosphoryl-undecaprenol N-acetylglucosamine transferase (358 aa).

UDP-N-acetyl-alpha-D-glucosamine contacts are provided by residues 11-13 (TAG), N125, R162, S196, and Q288.

The protein belongs to the glycosyltransferase 28 family. MurG subfamily.

The protein resides in the cell membrane. The enzyme catalyses di-trans,octa-cis-undecaprenyl diphospho-N-acetyl-alpha-D-muramoyl-L-alanyl-D-glutamyl-meso-2,6-diaminopimeloyl-D-alanyl-D-alanine + UDP-N-acetyl-alpha-D-glucosamine = di-trans,octa-cis-undecaprenyl diphospho-[N-acetyl-alpha-D-glucosaminyl-(1-&gt;4)]-N-acetyl-alpha-D-muramoyl-L-alanyl-D-glutamyl-meso-2,6-diaminopimeloyl-D-alanyl-D-alanine + UDP + H(+). It functions in the pathway cell wall biogenesis; peptidoglycan biosynthesis. Its function is as follows. Cell wall formation. Catalyzes the transfer of a GlcNAc subunit on undecaprenyl-pyrophosphoryl-MurNAc-pentapeptide (lipid intermediate I) to form undecaprenyl-pyrophosphoryl-MurNAc-(pentapeptide)GlcNAc (lipid intermediate II). The sequence is that of UDP-N-acetylglucosamine--N-acetylmuramyl-(pentapeptide) pyrophosphoryl-undecaprenol N-acetylglucosamine transferase from Leifsonia xyli subsp. xyli (strain CTCB07).